A 675-amino-acid polypeptide reads, in one-letter code: Methionine--tRNA ligase (675 aa).

The short motif at 15-25 is the 'HIGH' region element; it reads PYANGSIHLGH. Residues Cys-146, Cys-149, Cys-159, and Cys-162 each coordinate Zn(2+). Residues 332 to 336 carry the 'KMSKS' region motif; it reads KMSKS. Lys-335 is an ATP binding site. The tRNA-binding domain maps to 573-675; sequence DFAKVDMRIA…SGAQPGMQVK (103 aa).

This sequence belongs to the class-I aminoacyl-tRNA synthetase family. MetG type 1 subfamily. As to quaternary structure, homodimer. The cofactor is Zn(2+).

The protein localises to the cytoplasm. It carries out the reaction tRNA(Met) + L-methionine + ATP = L-methionyl-tRNA(Met) + AMP + diphosphate. Is required not only for elongation of protein synthesis but also for the initiation of all mRNA translation through initiator tRNA(fMet) aminoacylation. This chain is Methionine--tRNA ligase, found in Yersinia pestis bv. Antiqua (strain Angola).